The following is a 749-amino-acid chain: EF-hand domain-containing family member C2 (749 aa).

DM10 domains follow at residues 75-182, 226-368, and 431-538; these read DKQV…RKIG, HGKI…KSKY, and KSNI…EQNT. One can recognise an EF-hand domain in the interval 558–593; that stretch reads GKSRELKQVFKAADSKHTNMVDYNTFRDILMSLTVG.

As to quaternary structure, microtubule inner protein component of sperm flagellar doublet microtubules. As to expression, expressed in airway epithelial cells.

It localises to the cytoplasm. It is found in the cytoskeleton. The protein resides in the cilium axoneme. Its subcellular location is the flagellum axoneme. Microtubule inner protein (MIP) part of the dynein-decorated doublet microtubules (DMTs) in cilia axoneme, which is required for motile cilia beating. The protein is EF-hand domain-containing family member C2 of Homo sapiens (Human).